We begin with the raw amino-acid sequence, 332 residues long: Anthranilate phosphoribosyltransferase (332 aa).

5-phospho-alpha-D-ribose 1-diphosphate contacts are provided by residues glycine 78, 81–82, threonine 86, 88–91, 106–114, and alanine 118; these read GD, NVST, and KHGNRAASS. Glycine 78 contributes to the anthranilate binding site. Serine 90 contacts Mg(2+). Asparagine 109 is a binding site for anthranilate. An anthranilate-binding site is contributed by arginine 164. The Mg(2+) site is built by aspartate 223 and glutamate 224.

It belongs to the anthranilate phosphoribosyltransferase family. In terms of assembly, homodimer. Mg(2+) serves as cofactor.

The enzyme catalyses N-(5-phospho-beta-D-ribosyl)anthranilate + diphosphate = 5-phospho-alpha-D-ribose 1-diphosphate + anthranilate. It participates in amino-acid biosynthesis; L-tryptophan biosynthesis; L-tryptophan from chorismate: step 2/5. Catalyzes the transfer of the phosphoribosyl group of 5-phosphorylribose-1-pyrophosphate (PRPP) to anthranilate to yield N-(5'-phosphoribosyl)-anthranilate (PRA). The sequence is that of Anthranilate phosphoribosyltransferase from Sphingopyxis alaskensis (strain DSM 13593 / LMG 18877 / RB2256) (Sphingomonas alaskensis).